Reading from the N-terminus, the 205-residue chain is Guanylate kinase (205 aa).

One can recognise a Guanylate kinase-like domain in the interval 5–184 (GLLIVLSGPS…AVQKIKGIVE (180 aa)). Residue 12–19 (GPSGVGKG) participates in ATP binding.

The protein belongs to the guanylate kinase family.

The protein localises to the cytoplasm. The catalysed reaction is GMP + ATP = GDP + ADP. Its function is as follows. Essential for recycling GMP and indirectly, cGMP. The chain is Guanylate kinase from Listeria innocua serovar 6a (strain ATCC BAA-680 / CLIP 11262).